The sequence spans 1403 residues: DNA-directed RNA polymerase subunit beta' (1403 aa).

Zn(2+) contacts are provided by cysteine 71, cysteine 73, cysteine 86, and cysteine 89. Residues aspartate 462, aspartate 464, and aspartate 466 each contribute to the Mg(2+) site. Positions 811, 885, 892, and 895 each coordinate Zn(2+).

This sequence belongs to the RNA polymerase beta' chain family. As to quaternary structure, the RNAP catalytic core consists of 2 alpha, 1 beta, 1 beta' and 1 omega subunit. When a sigma factor is associated with the core the holoenzyme is formed, which can initiate transcription. It depends on Mg(2+) as a cofactor. The cofactor is Zn(2+).

The catalysed reaction is RNA(n) + a ribonucleoside 5'-triphosphate = RNA(n+1) + diphosphate. Functionally, DNA-dependent RNA polymerase catalyzes the transcription of DNA into RNA using the four ribonucleoside triphosphates as substrates. The protein is DNA-directed RNA polymerase subunit beta' of Bartonella tribocorum (strain CIP 105476 / IBS 506).